The following is a 160-amino-acid chain: Lipoprotein signal peptidase (160 aa).

Helical transmembrane passes span 60–80 and 84–104; these read IEWLIAASVLGVILAMTAFFI and LPFLDTRPGLIALGVILAGTV. Catalysis depends on residues D118 and D132. A helical transmembrane segment spans residues 128–148; the sequence is FNIADSCLTVGVIGLLLLYIV.

The protein belongs to the peptidase A8 family.

Its subcellular location is the cell membrane. The catalysed reaction is Release of signal peptides from bacterial membrane prolipoproteins. Hydrolyzes -Xaa-Yaa-Zaa-|-(S,diacylglyceryl)Cys-, in which Xaa is hydrophobic (preferably Leu), and Yaa (Ala or Ser) and Zaa (Gly or Ala) have small, neutral side chains.. The protein operates within protein modification; lipoprotein biosynthesis (signal peptide cleavage). Its function is as follows. This protein specifically catalyzes the removal of signal peptides from prolipoproteins. The chain is Lipoprotein signal peptidase from Dehalococcoides mccartyi (strain CBDB1).